The chain runs to 629 residues: tRNA uridine 5-carboxymethylaminomethyl modification enzyme MnmG (629 aa).

FAD is bound at residue 14–19 (GAGHAG). 274-288 (GPRYCPSIEDKVVRF) contacts NAD(+).

It belongs to the MnmG family. As to quaternary structure, homodimer. Heterotetramer of two MnmE and two MnmG subunits. FAD is required as a cofactor.

It localises to the cytoplasm. In terms of biological role, NAD-binding protein involved in the addition of a carboxymethylaminomethyl (cmnm) group at the wobble position (U34) of certain tRNAs, forming tRNA-cmnm(5)s(2)U34. The chain is tRNA uridine 5-carboxymethylaminomethyl modification enzyme MnmG from Xylella fastidiosa (strain 9a5c).